The chain runs to 192 residues: Elongation factor P (192 aa).

The protein belongs to the elongation factor P family.

It is found in the cytoplasm. Its pathway is protein biosynthesis; polypeptide chain elongation. In terms of biological role, involved in peptide bond synthesis. Stimulates efficient translation and peptide-bond synthesis on native or reconstituted 70S ribosomes in vitro. Probably functions indirectly by altering the affinity of the ribosome for aminoacyl-tRNA, thus increasing their reactivity as acceptors for peptidyl transferase. The sequence is that of Elongation factor P (efp) from Aquifex aeolicus (strain VF5).